The sequence spans 150 residues: Protein-export protein SecB (150 aa).

The protein belongs to the SecB family. Homotetramer, a dimer of dimers. One homotetramer interacts with 1 SecA dimer.

The protein localises to the cytoplasm. Functionally, one of the proteins required for the normal export of preproteins out of the cell cytoplasm. It is a molecular chaperone that binds to a subset of precursor proteins, maintaining them in a translocation-competent state. It also specifically binds to its receptor SecA. The polypeptide is Protein-export protein SecB (Polaromonas sp. (strain JS666 / ATCC BAA-500)).